A 292-amino-acid chain; its full sequence is Homoserine kinase (292 aa).

Residue 84-94 (PLSRGLGSSSA) coordinates ATP.

Belongs to the GHMP kinase family. Homoserine kinase subfamily.

Its subcellular location is the cytoplasm. It carries out the reaction L-homoserine + ATP = O-phospho-L-homoserine + ADP + H(+). It functions in the pathway amino-acid biosynthesis; L-threonine biosynthesis; L-threonine from L-aspartate: step 4/5. Its function is as follows. Catalyzes the ATP-dependent phosphorylation of L-homoserine to L-homoserine phosphate. In Campylobacter jejuni subsp. jejuni serotype O:6 (strain 81116 / NCTC 11828), this protein is Homoserine kinase.